We begin with the raw amino-acid sequence, 530 residues long: Calcium uptake protein 3, mitochondrial (530 aa).

The N-terminal 43 residues, 1–43 (MAALRRLLWPPPRVSPPLCAHQPLLGPWGRPAVTTLGLPGRPF), are a transit peptide targeting the mitochondrion. Positions 92 to 115 (GSPATGRPSKSAATEPEDPPRGRG) are disordered. The EF-hand 1 domain maps to 232–267 (KPHAGFRIAFNMFDTDGNEMVDKKEFLVLQEIFRKK). Residues Asp-245, Asp-247, Asn-249, Met-251, Asp-253, and Glu-256 each coordinate Ca(2+). The EF-hand 2; degenerate domain occupies 401–436 (VENTSVFLENVRYSIPEEKGITFDEFRSFFQFLNNL). Residues 470–505 (FSPHLVNTVFKIFDVDKDDQLSYKEFIGIMKDRLHR) enclose the EF-hand 3 domain. Asp-483, Asp-485, Asp-487, Gln-489, and Glu-494 together coordinate Ca(2+).

This sequence belongs to the MICU1 family. MICU3 subfamily. As to quaternary structure, heterodimer; disulfide-linked; heterodimerizes with MICU1. Component of the uniplex complex, composed of MCU, EMRE/SMDT1, MICU1 and MICU3 in a 4:4:1:1 stoichiometry. As to expression, specifically expressed in the central nervous system and skeletal muscle.

The protein localises to the mitochondrion intermembrane space. Its subcellular location is the mitochondrion inner membrane. In terms of biological role, tissue-specific calcium sensor of the mitochondrial calcium uniporter (MCU) channel, which specifically regulates MCU channel activity in the central nervous system and skeletal muscle. Senses calcium level via its EF-hand domains: compared to MICU1 and MICU2, MICU3 has a higher affinity for calcium. MICU1 and MICU3 form a disulfide-linked heterodimer that stimulates and inhibits MCU activity, depending on the concentration of calcium. At low calcium levels, MICU1 occludes the pore of the MCU channel, preventing mitochondrial calcium uptake. At higher calcium levels, calcium-binding to MICU1 and MICU3 induces a conformational change that weakens MCU-MICU1 interactions and moves the MICU1-MICU3 heterodimer away from the pore, allowing calcium permeation through the MCU channel. The high calcium affinity of MICU3 lowers the calcium threshold necessary for calcium permeation through the MCU channel. The MICU1-MICU3 heterodimer promotes flexibility of neurotransmission in neuronal cells by enhancing mitochondrial calcium uptake in presynapses. It is also required to increase mitochondrial calcium uptake in skeletal muscle cells, thereby increasing ATP production. This is Calcium uptake protein 3, mitochondrial from Homo sapiens (Human).